The chain runs to 466 residues: Pyruvate kinase (466 aa).

R32 provides a ligand contact to substrate. K(+) is bound by residues N34, S36, and D66. 34 to 37 (NTSH) provides a ligand contact to ATP. An ATP-binding site is contributed by R73. E219 is a binding site for Mg(2+). Residues G242, D243, and T275 each contribute to the substrate site. D243 is a binding site for Mg(2+).

It belongs to the pyruvate kinase family. Homotetramer. A divalent metal cation is required as a cofactor.

It catalyses the reaction pyruvate + ATP = phosphoenolpyruvate + ADP + H(+). It participates in carbohydrate degradation; glycolysis; pyruvate from D-glyceraldehyde 3-phosphate: step 5/5. With respect to regulation, allosterically activated by AMP and inhibited by ATP. The polypeptide is Pyruvate kinase (pyk) (Thermotoga maritima (strain ATCC 43589 / DSM 3109 / JCM 10099 / NBRC 100826 / MSB8)).